We begin with the raw amino-acid sequence, 171 residues long: ATP synthase subunit b (171 aa).

The helical transmembrane segment at 2-22 (FVVKMVLGFLILLSPLCATGL) threads the bilayer.

It belongs to the ATPase B chain family. As to quaternary structure, F-type ATPases have 2 components, F(1) - the catalytic core - and F(0) - the membrane proton channel. F(1) has five subunits: alpha(3), beta(3), gamma(1), delta(1), epsilon(1). F(0) has three main subunits: a(1), b(2) and c(10-14). The alpha and beta chains form an alternating ring which encloses part of the gamma chain. F(1) is attached to F(0) by a central stalk formed by the gamma and epsilon chains, while a peripheral stalk is formed by the delta and b chains.

The protein resides in the cell inner membrane. Its function is as follows. F(1)F(0) ATP synthase produces ATP from ADP in the presence of a proton or sodium gradient. F-type ATPases consist of two structural domains, F(1) containing the extramembraneous catalytic core and F(0) containing the membrane proton channel, linked together by a central stalk and a peripheral stalk. During catalysis, ATP synthesis in the catalytic domain of F(1) is coupled via a rotary mechanism of the central stalk subunits to proton translocation. Component of the F(0) channel, it forms part of the peripheral stalk, linking F(1) to F(0). This is ATP synthase subunit b from Helicobacter pylori (strain J99 / ATCC 700824) (Campylobacter pylori J99).